A 691-amino-acid chain; its full sequence is Pentatricopeptide repeat-containing protein ATP4, chloroplastic (691 aa).

A compositionally biased stretch (low complexity) spans 1–17; it reads MASLPLCRSPSSLLPSW. The N-terminal 35 residues, 1–35, are a transit peptide targeting the chloroplast; that stretch reads MASLPLCRSPSSLLPSWPHRPISASFNPKNPSSPV. Positions 1–76 are disordered; that stretch reads MASLPLCRSP…SSNTRFLWVN (76 aa). The span at 24–33 shows a compositional bias: polar residues; the sequence is ASFNPKNPSS. The segment covering 45–56 has biased composition (pro residues); sequence PPQPQDPSPPSD. Over residues 61–76 the composition is skewed to polar residues; sequence GTRPSSSSNTRFLWVN. 10 PPR repeats span residues 163–197, 198–232, 233–267, 268–302, 303–337, 338–372, 373–403, 411–445, 446–480, and 546–580; these read KVIL…GVQP, DNAT…GCSP, DMLT…KWQL, DPVI…GVRP, NLVV…QVQP, SRAT…AMGI, DVML…MKAS, DSWS…GFKP, NIFV…GIIP, and KMPY…GIYA. Residues 592–677 enclose the Smr domain; the sequence is LHLRGLSVGA…WFLTTNVAAK (86 aa).

It belongs to the PPR family. P subfamily.

It is found in the plastid. The protein resides in the chloroplast stroma. Functionally, involved in translation and accumulation of chloroplast ATP synthase subunits. Interacts with the 5'-UTR of the chloroplast bicistronic atpB and atpE mRNA and activates its translation by facilitating ribosome association with the mRNA. Required for accumulation and activity of the chloroplast ATP synthase. Enhances atpA translation and is required for accumulation of specific processed atpF and psaJ transcripts. Required for the stabilization of bicistronic rpl16 and rpl14 mRNAs. This chain is Pentatricopeptide repeat-containing protein ATP4, chloroplastic, found in Zea mays (Maize).